A 414-amino-acid chain; its full sequence is COUP transcription factor 2 (414 aa).

Residues 1-72 (MAMVVSTWRD…PGGPGSDKQQ (72 aa)) are disordered. The span at 27-37 (PPVPGPPPGAP) shows a compositional bias: pro residues. Residues 38–57 (HTPQTPGQGGPASTPAQTAA) show a composition bias toward low complexity. Residue Thr-51 is modified to Phosphothreonine. Positions 58–67 (GGQGGPGGPG) are enriched in gly residues. Positions 76 to 151 (HIECVVCGDK…VGMRREAVQR (76 aa)) form a DNA-binding region, nuclear receptor. 2 NR C4-type zinc fingers span residues 79–99 (CVVCGDKSSGKHYGQFTCEGC) and 115–139 (CRANRNCPIDQHHRNQCQYCRLKKC). The segment at 117–414 (ANRNCPIDQH…SFNWPYMAIQ (298 aa)) is interaction with ZFPM2. The NR LBD domain occupies 177 to 403 (YLSGYISLLL…TLIRDMLLSG (227 aa)). Residues 337–414 (LQEKSQCALE…SFNWPYMAIQ (78 aa)) are important for dimerization.

The protein belongs to the nuclear hormone receptor family. NR2 subfamily. Interacts with SQSTM1. Binds DNA as a dimer; homodimer or heterodimer with NR2F6. Interacts with NCOA1, NCOA2, NCOA3 and PPARGC1A. Interacts with ZFPM2. Ubiquitous. Expressed in the stromal cells of developing fetal ovaries.

The protein localises to the nucleus. Its function is as follows. Ligand-activated transcription factor. Activated by high concentrations of 9-cis-retinoic acid and all-trans-retinoic acid, but not by dexamethasone, cortisol or progesterone (in vitro). Regulation of the apolipoprotein A-I gene transcription. Binds to DNA site A. May be required to establish ovary identity during early gonad development. This is COUP transcription factor 2 (NR2F2) from Homo sapiens (Human).